A 590-amino-acid chain; its full sequence is Synaptotagmin-3 (590 aa).

The Vesicular portion of the chain corresponds to 1-54; sequence MSGDYEDDLCRRALILVSDLCARVRDADTNDRCQEFNDRIRGYPRGPDADISVS. The interval 10 to 34 is cysteine motif; the sequence is CRRALILVSDLCARVRDADTNDRCQ. The helical transmembrane segment at 55 to 75 threads the bilayer; that stretch reads LLSVIVTFCGIVLLGVSLFVS. Topologically, residues 76 to 590 are cytoplasmic; it reads WKLCWVPWRD…KGLSEKENSE (515 aa). Disordered regions lie at residues 143–220, 234–260, and 273–295; these read AELL…VTSL, TQQT…LPGG, and ELYQ…GEAG. The segment covering 185 to 203 has biased composition (low complexity); the sequence is SPELPSEGGAGSGLLLLPP. The span at 234–243 shows a compositional bias: polar residues; it reads TQQTLTSQPD. Residues 278–295 show a composition bias toward gly residues; sequence TGPGGRRSGGGPGSGEAG. Position 284 is an omega-N-methylarginine (Arg-284). 2 C2 domains span residues 299–420 and 431–565; these read PCGR…PLWR and DLGE…EHWH. The Ca(2+) site is built by Asp-330, Asp-336, Asp-388, Phe-389, Asp-390, Ser-393, Asp-396, Asp-462, Asp-468, Asp-522, and Asp-524.

This sequence belongs to the synaptotagmin family. As to quaternary structure, homodimer; disulfide-linked via the cysteine motif. Can also form heterodimers with SYT6, SYT9 and SYT10. The cofactor is Ca(2+). Expressed in melanocytes.

Its subcellular location is the cell membrane. The protein localises to the cytoplasmic vesicle. It is found in the secretory vesicle membrane. In terms of biological role, ca(2+) sensor involved in Ca(2+)-dependent exocytosis of secretory vesicles through Ca(2+) and phospholipid binding to the C2 domain. Ca(2+) induces binding of the C2-domains to phospholipid membranes and to assembled SNARE-complexes; both actions contribute to triggering exocytosis. Plays a role in dendrite formation by melanocytes. The sequence is that of Synaptotagmin-3 (SYT3) from Homo sapiens (Human).